Here is a 654-residue protein sequence, read N- to C-terminus: tRNA uridine 5-carboxymethylaminomethyl modification enzyme MnmG (654 aa).

17-22 is a binding site for FAD; that stretch reads GGGHAG. 289–303 contributes to the NAD(+) binding site; that stretch reads GPRYCPSIEDKIVKF.

Belongs to the MnmG family. Homodimer. Heterotetramer of two MnmE and two MnmG subunits. FAD is required as a cofactor.

Its subcellular location is the cytoplasm. NAD-binding protein involved in the addition of a carboxymethylaminomethyl (cmnm) group at the wobble position (U34) of certain tRNAs, forming tRNA-cmnm(5)s(2)U34. This is tRNA uridine 5-carboxymethylaminomethyl modification enzyme MnmG from Prochlorococcus marinus subsp. pastoris (strain CCMP1986 / NIES-2087 / MED4).